The chain runs to 400 residues: Na(+)/H(+) antiporter NhaA (400 aa).

12 consecutive transmembrane segments (helical) span residues 26-46, 71-91, 107-127, 137-157, 166-186, 189-209, 212-232, 233-253, 273-293, 299-319, 340-360, and 373-393; these read AGGI…NSPL, LIHW…GMEV, IFPA…YWFI, GWAI…ALLS, IFLL…IALF, HGLS…LILL, FKVS…ASVL, KSGV…PLKG, FVIL…GIDV, PLLL…IFGF, IFAV…LASL, and LSRL…YLFL.

It belongs to the NhaA Na(+)/H(+) (TC 2.A.33) antiporter family.

The protein localises to the cell inner membrane. The enzyme catalyses Na(+)(in) + 2 H(+)(out) = Na(+)(out) + 2 H(+)(in). Its function is as follows. Na(+)/H(+) antiporter that extrudes sodium in exchange for external protons. This chain is Na(+)/H(+) antiporter NhaA, found in Haemophilus influenzae (strain PittEE).